The chain runs to 140 residues: MALERTLSIIKPDATKRNLTGKINAVFEGAGLRIVAQKRIQLTEKQAGAFYAVHKERPFYGSLVSSMIAEPVVVQVLQGENAVAKNREVMGATNPADAAEGTVRKLFAESIEANSVHGSDSLENAKNEISFFFAETEILP.

ATP contacts are provided by K11, F59, R87, T93, R104, and N114. H117 acts as the Pros-phosphohistidine intermediate in catalysis.

The protein belongs to the NDK family. As to quaternary structure, homotetramer. It depends on Mg(2+) as a cofactor.

It is found in the cytoplasm. The enzyme catalyses a 2'-deoxyribonucleoside 5'-diphosphate + ATP = a 2'-deoxyribonucleoside 5'-triphosphate + ADP. It catalyses the reaction a ribonucleoside 5'-diphosphate + ATP = a ribonucleoside 5'-triphosphate + ADP. Functionally, major role in the synthesis of nucleoside triphosphates other than ATP. The ATP gamma phosphate is transferred to the NDP beta phosphate via a ping-pong mechanism, using a phosphorylated active-site intermediate. The chain is Nucleoside diphosphate kinase from Gluconobacter oxydans (strain 621H) (Gluconobacter suboxydans).